A 1067-amino-acid chain; its full sequence is TBC1 domain family member 31 (1067 aa).

WD repeat units lie at residues 36-75 (GKVV…FRLV), 76-119 (LKTG…SWMR), 120-161 (GHEG…KLNI), 162-201 (RQSV…CKYQ), 202-249 (LPLP…RVIQ), and 250-288 (MPSQ…RFIN). The region spanning 419 to 594 (EYPAKYRMFV…RLFDNIFSNH (176 aa)) is the Rab-GAP TBC domain. Residues 724–773 (QQELLQKAEEQRKHVLEQEEEKLTQQRAKLAAMKRELKVKELQLLDATRR) adopt a coiled-coil conformation. 2 stretches are compositionally biased toward basic and acidic residues: residues 896–912 (KADA…EELQ) and 926–937 (MREEAHRKKDEA). Disordered regions lie at residues 896–955 (KADA…HSDG) and 1045–1067 (AARA…PVSP). 2 stretches are compositionally biased toward polar residues: residues 941-953 (IQES…STHS) and 1052-1067 (SSAS…PVSP).

The protein resides in the cytoplasm. The protein localises to the cytoskeleton. Its subcellular location is the microtubule organizing center. It localises to the centrosome. It is found in the centriolar satellite. The protein resides in the cilium basal body. Molecular adapter which is involved in cilium biogenesis. Part of a functional complex including OFD1 a centriolar protein involved in cilium assembly. Could regulate the cAMP-dependent phosphorylation of OFD1, and its subsequent ubiquitination by PJA2 which ultimately leads to its proteasomal degradation. This chain is TBC1 domain family member 31, found in Oryzias latipes (Japanese rice fish).